A 146-amino-acid polypeptide reads, in one-letter code: Large ribosomal subunit protein uL15 (146 aa).

Positions 1-13 are enriched in basic and acidic residues; sequence MKLHELKAAEGSR. The tract at residues 1–56 is disordered; that stretch reads MKLHELKAAEGSRRVRNRVGRGAATGNGKTSGRGQKGQKARSGGKLRPGFEGGQLP. The span at 23–35 shows a compositional bias: gly residues; that stretch reads AATGNGKTSGRGQ.

Belongs to the universal ribosomal protein uL15 family. Part of the 50S ribosomal subunit.

Its function is as follows. Binds to the 23S rRNA. This chain is Large ribosomal subunit protein uL15, found in Staphylococcus epidermidis (strain ATCC 35984 / DSM 28319 / BCRC 17069 / CCUG 31568 / BM 3577 / RP62A).